The chain runs to 418 residues: CinA-like protein (418 aa).

It belongs to the CinA family.

The chain is CinA-like protein from Flavobacterium psychrophilum (strain ATCC 49511 / DSM 21280 / CIP 103535 / JIP02/86).